Reading from the N-terminus, the 92-residue chain is Large ribosomal subunit protein bL31 (92 aa).

It belongs to the bacterial ribosomal protein bL31 family. Type A subfamily. In terms of assembly, part of the 50S ribosomal subunit.

In terms of biological role, binds the 23S rRNA. The protein is Large ribosomal subunit protein bL31 of Mesoplasma florum (strain ATCC 33453 / NBRC 100688 / NCTC 11704 / L1) (Acholeplasma florum).